We begin with the raw amino-acid sequence, 214 residues long: Cell division protein DamX (214 aa).

Composition is skewed to polar residues over residues 1 to 14 and 43 to 53; these read GSGT…QPQQ and QGMTGAASTLP. A disordered region spans residues 1 to 133; the sequence is GSGTPTEAQT…SVQSAPGSHY (133 aa). Residues 44–65 traverse the membrane as a helical segment; sequence GMTGAASTLPTAPATVMSGAAA. 2 stretches are compositionally biased toward low complexity: residues 78–97 and 110–131; these read QQHK…TQHK and SSTA…APGS. Positions 127-204 constitute an SPOR domain; sequence SAPGSHYTLQ…VQAKKPWVRP (78 aa).

This sequence belongs to the DamX family.

The protein localises to the cell inner membrane. In terms of biological role, non-essential cell division protein. The protein is Cell division protein DamX of Serratia marcescens.